Consider the following 99-residue polypeptide: Nucleoid-associated protein SSA_0326 (99 aa).

The segment covering 1 to 15 has biased composition (low complexity); the sequence is MMNMQSMMKQAQKLQ. Positions 1–23 are disordered; sequence MMNMQSMMKQAQKLQKQMEKGQA.

This sequence belongs to the YbaB/EbfC family. As to quaternary structure, homodimer.

The protein localises to the cytoplasm. The protein resides in the nucleoid. Its function is as follows. Binds to DNA and alters its conformation. May be involved in regulation of gene expression, nucleoid organization and DNA protection. The chain is Nucleoid-associated protein SSA_0326 from Streptococcus sanguinis (strain SK36).